The sequence spans 351 residues: Succinylglutamate desuccinylase (351 aa).

Zn(2+) contacts are provided by H73, E76, and H168. E231 is an active-site residue.

It belongs to the AspA/AstE family. Succinylglutamate desuccinylase subfamily. It depends on Zn(2+) as a cofactor.

It catalyses the reaction N-succinyl-L-glutamate + H2O = L-glutamate + succinate. The protein operates within amino-acid degradation; L-arginine degradation via AST pathway; L-glutamate and succinate from L-arginine: step 5/5. Its function is as follows. Transforms N(2)-succinylglutamate into succinate and glutamate. The protein is Succinylglutamate desuccinylase of Burkholderia lata (strain ATCC 17760 / DSM 23089 / LMG 22485 / NCIMB 9086 / R18194 / 383).